The chain runs to 492 residues: Ethanolamine-phosphate phospho-lyase (492 aa).

Lysine 280 is subject to N6-(pyridoxal phosphate)lysine. Positions 462–492 (ASDENGLVHPSNGNSHKHTSTIPLSKKTKRN) are disordered.

Belongs to the class-III pyridoxal-phosphate-dependent aminotransferase family. Homotetramer. It depends on pyridoxal 5'-phosphate as a cofactor.

The protein resides in the mitochondrion. The enzyme catalyses phosphoethanolamine + H2O = acetaldehyde + NH4(+) + phosphate. In terms of biological role, catalyzes the pyridoxal-phosphate-dependent breakdown of phosphoethanolamine, converting it to ammonia, inorganic phosphate and acetaldehyde. The sequence is that of Ethanolamine-phosphate phospho-lyase (etnppl) from Danio rerio (Zebrafish).